The chain runs to 376 residues: Delta(12) fatty acid desaturase fat-2 (376 aa).

The next 4 helical transmembrane spans lie at 45 to 65 (ISYL…VPYI), 69 to 89 (LGWI…SALF), 203 to 223 (VKCA…FVLC), and 228 to 248 (YTFV…LVII).

It belongs to the fatty acid desaturase type 1 family.

The protein localises to the membrane. It catalyses the reaction (9Z)-octadecenoyl-CoA + 2 Fe(II)-[cytochrome b5] + O2 + 2 H(+) = (9Z,12Z)-octadecadienoyl-CoA + 2 Fe(III)-[cytochrome b5] + 2 H2O. The enzyme catalyses (9Z)-hexadecenoyl-CoA + 2 Fe(II)-[cytochrome b5] + O2 + 2 H(+) = (9Z,12Z)-hexadecadienoyl-CoA + 2 Fe(III)-[cytochrome b5] + 2 H2O. It carries out the reaction (9Z,12Z)-octadecadienoyl-CoA + 2 Fe(II)-[cytochrome b5] + O2 + 2 H(+) = (9Z,12Z,15Z)-octadecatrienoyl-CoA + 2 Fe(III)-[cytochrome b5] + 2 H2O. The catalysed reaction is (9Z)-heptadecenoyl-CoA + 2 Fe(II)-[cytochrome b5] + O2 + 2 H(+) = (9Z,12Z)-heptadecadienoyl-CoA + 2 Fe(III)-[cytochrome b5] + 2 H2O. It catalyses the reaction (9Z)-pentadecenoyl-CoA + 2 Fe(II)-[cytochrome b5] + O2 + 2 H(+) = (9Z,12Z)-pentadecadienoyl-CoA + 2 Fe(III)-[cytochrome b5] + 2 H2O. The enzyme catalyses (6Z,9Z,12Z)-octadecatrienoyl-CoA + 2 Fe(II)-[cytochrome b5] + O2 + 2 H(+) = (6Z,9Z,12Z,15Z)-octadecatetraenoyl-CoA + 2 Fe(III)-[cytochrome b5] + 2 H2O. It carries out the reaction (9Z)-tetradecenoyl-CoA + 2 Fe(II)-[cytochrome b5] + O2 + 2 H(+) = (9Z,12Z)-tetradecadienoyl-CoA + 2 Fe(III)-[cytochrome b5] + 2 H2O. Its pathway is lipid metabolism; polyunsaturated fatty acid biosynthesis. Its function is as follows. Can function as a Delta(12)/Delta(15) bifunctional desaturase and behaves as a nu +3' desaturase. Introduces a double bond in the fatty acid chain three carbons away from an existing double bond to biosynthesize polyunsaturated fatty acids (PUFAs) endogenously (PUFAs are essential for membrane structure and many cellular and physiological processes). Acts on a number of substrates like oleoyl-CoA ((9Z)-octadecenoyl-CoA, 18:1n-9), palmitoleoyl-CoA ((9Z)-hexadecenoyl-CoA, 16:1n-7), and gamma-linolenoyl-CoA ((6Z,9Z,12Z)-octadecatrienoyl-CoA, 18:3n-6), to generate linoleoyl-CoA ((9Z,12Z)-octadecadienoyl-CoA, 18:2n-6), (9Z,12Z)-hexadecadienoyl-CoA (16:2n-4) and (6Z,9Z,12Z,15Z)-octadecatetraenoyl-CoA (18:4n-3) respectively. Unlike plants, Caenorhabditis elegans desaturases seem to use fatty acyl-CoAs as substrates. This is Delta(12) fatty acid desaturase fat-2 (fat-2) from Caenorhabditis elegans.